The chain runs to 433 residues: Signal recognition particle 54 kDa protein (433 aa).

GTP is bound by residues 106 to 113, 186 to 190, and 244 to 247; these read GVEGSGKT, DTAGR, and TKMD.

The protein belongs to the GTP-binding SRP family. SRP54 subfamily. Part of the signal recognition particle protein translocation system, which is composed of SRP and FtsY. Archaeal SRP consists of a 7S RNA molecule of 300 nucleotides and two protein subunits: SRP54 and SRP19.

It is found in the cytoplasm. The catalysed reaction is GTP + H2O = GDP + phosphate + H(+). In terms of biological role, involved in targeting and insertion of nascent membrane proteins into the cytoplasmic membrane. Binds to the hydrophobic signal sequence of the ribosome-nascent chain (RNC) as it emerges from the ribosomes. The SRP-RNC complex is then targeted to the cytoplasmic membrane where it interacts with the SRP receptor FtsY. The chain is Signal recognition particle 54 kDa protein from Pyrobaculum aerophilum (strain ATCC 51768 / DSM 7523 / JCM 9630 / CIP 104966 / NBRC 100827 / IM2).